The following is a 440-amino-acid chain: MNKFRTFPQINTLIEDESLKSYPFYIKAFFCKKVVAKLKENFSQDEISKDKLLLEIKKEIKTFYRKDLQSVINASGVVIHTNLGRSVIHEELYEACKDIICNYSNVEFDLENGKRGSRYALVLEKLKMLFECEDALVVNNNAAAVFLVLNSLCYNKEIISSRGELVEIGGSFRVPEVIKAAGVKLCEVGTSNKTHLKDYEQAISENTALILKTHKSNFALMGFHSEVNIKDLHELAKEKGLLSYYDLGSGWCENLNEKLIKNEPKIKKLVQECDILSFSGDKLFGSVQAGIILGKKELIEKLKQNQLLRMLRVDKLTLSFLNESLKAYLQKDYEKIITLKLLNDDLSFIEKKALRVQKELKFQTQLKKSKSLVGGGSMPDKSLDTYILTFQGDALKLQTRFRKENIIGRIENDEFVLDFRTIRENELQKLILIINQMENL.

At lysine 282 the chain carries N6-(pyridoxal phosphate)lysine.

This sequence belongs to the SelA family. The cofactor is pyridoxal 5'-phosphate.

It localises to the cytoplasm. The enzyme catalyses L-seryl-tRNA(Sec) + selenophosphate + H(+) = L-selenocysteinyl-tRNA(Sec) + phosphate. Its pathway is aminoacyl-tRNA biosynthesis; selenocysteinyl-tRNA(Sec) biosynthesis; selenocysteinyl-tRNA(Sec) from L-seryl-tRNA(Sec) (bacterial route): step 1/1. Its function is as follows. Converts seryl-tRNA(Sec) to selenocysteinyl-tRNA(Sec) required for selenoprotein biosynthesis. This is L-seryl-tRNA(Sec) selenium transferase from Campylobacter jejuni subsp. jejuni serotype O:6 (strain 81116 / NCTC 11828).